The sequence spans 816 residues: Transducer protein Htr18 (816 aa).

2 helical membrane passes run 21 to 41 and 282 to 302; these read VVIV…TQAV and NIVV…LVIG. The 54-residue stretch at 303-356 folds into the HAMP 1 domain; sequence RDALTALTDMSDRAEAIAAGDIDTAIEETTRIDEVGDLRRSFRDIQEYLQTVAG. Positions 399–425 are disordered; the sequence is DAQETAEQSRKEAEQSREEAEALAAAL. The segment covering 405-418 has biased composition (basic and acidic residues); sequence EQSRKEAEQSREEA. The HAMP 2 domain maps to 423 to 476; sequence AALESQAQDIRETVEHAADGDLTQRLETDTDHESMAAIATALNSLLEELEGTIH. The Methyl-accepting transducer domain maps to 495–731; that stretch reads SAEEVKRASG…EVVTMVDEVG (237 aa). The interval 790 to 816 is disordered; the sequence is GGAENTTGAFVRSASTDHSRDATHHDT. Residues 793-803 are compositionally biased toward polar residues; it reads ENTTGAFVRSA. Positions 804 to 816 are enriched in basic and acidic residues; that stretch reads STDHSRDATHHDT.

It belongs to the methyl-accepting chemotaxis (MCP) protein family. Post-translationally, methylated by CheR.

It is found in the cell membrane. Potentially involved in chemo- or phototactic signal transduction. The protein is Transducer protein Htr18 (htr18) of Halobacterium salinarum (strain ATCC 29341 / DSM 671 / R1).